The primary structure comprises 580 residues: Keratin, type II cytoskeletal 5 (580 aa).

The head stretch occupies residues 1-161; it reads MSRQSSVSFR…DPTIQRVRTE (161 aa). Phosphoserine occurs at positions 5, 8, 16, and 21. T24 is modified (phosphothreonine; by CDK1). A phosphoserine mark is found at S26, S36, S47, S61, S68, S72, S75, and S79. Phosphothreonine; by CDK1 is present on T145. Phosphothreonine; by AURKB is present on T160. The interval 162–197 is coil 1A; it reads EREQIKTLNNKFASFIDKVRFLEQQNKVLDTKWALL. The IF rod domain occupies 162-475; sequence EREQIKTLNN…KLLEGEECRL (314 aa). Positions 198-216 are linker 1; the sequence is QEQGTKTIKQNLDPLFEQY. The coil 1B stretch occupies residues 217-309; the sequence is INNLRRQLDG…FFDAELSQMQ (93 aa). Positions 310 to 332 are linker 12; the sequence is THVSDTSVVLSMDNNRSLDLDSI. The coil 2 stretch occupies residues 333 to 471; that stretch reads IAEVKAQYED…ATYRKLLEGE (139 aa). Residues 472–580 are tail; that stretch reads ECRLSGEGVG…TSSSRRSFKS (109 aa). Residue R526 is modified to Omega-N-methylarginine. The tract at residues 555-580 is disordered; sequence FGSGGGSGSSVKFVSTTSSSRRSFKS. Over residues 563–580 the composition is skewed to low complexity; sequence SSVKFVSTTSSSRRSFKS.

It belongs to the intermediate filament family. Heterodimer of a type I and a type II keratin. Heterodimer with type I keratin KRT25 leading to the formation of keratin intermediate filament (KIF) network. Forms a heterodimer (via 2B domains) with KRT14 (via 2B domains). Interacts with PLEC isoform 1C, when in a heterodimer with KRT14. Interacts with TCHP. Interacts with EPPK1. Interacts with AMELX. Interacts with PKP1 (via N-terminus) and PKP2. Phosphorylated by CDK1, AURKB and Rho-kinase, phosphorylation is regulated by the cell cycle. Thr-24 phosphorylation, mediated by CDK1, peaks during prometaphase or metaphase cells with phosphorylated filamentous structures evident throughout the cytoplasm during early mitosis. CDK1 phosphorylates Thr-24 in mitotic cells at the site of injury. Post-translationally, O-glycosylated. As to expression, expressed in the corneal epithelium (at protein level). Expressed in the epidermis of the ear (at protein level). Expressed in the basal and spinous layers of the skin at birth (at protein level).

The protein localises to the cytoplasm. Functionally, required for the formation of keratin intermediate filaments in the basal epidermis and maintenance of the skin barrier in response to mechanical stress. Regulates the recruitment of Langerhans cells to the epidermis, potentially by modulation of the abundance of macrophage chemotactic cytokines, macrophage inflammatory cytokines and CTNND1 localization in keratinocytes. This Mus musculus (Mouse) protein is Keratin, type II cytoskeletal 5.